The primary structure comprises 431 residues: 5'-deoxyadenosine deaminase (431 aa).

Positions 65 and 67 each coordinate Zn(2+). 2 residues coordinate substrate: Glu94 and His185. His212 contributes to the Zn(2+) binding site. Glu215 and Asp300 together coordinate substrate. Asp300 contributes to the Zn(2+) binding site.

This sequence belongs to the metallo-dependent hydrolases superfamily. MTA/SAH deaminase family. As to quaternary structure, homotetramer. Zn(2+) is required as a cofactor.

The enzyme catalyses 5'-deoxyadenosine + H2O + H(+) = 5'-deoxyinosine + NH4(+). The catalysed reaction is S-adenosyl-L-homocysteine + H2O + H(+) = S-inosyl-L-homocysteine + NH4(+). It carries out the reaction S-methyl-5'-thioadenosine + H2O + H(+) = S-methyl-5'-thioinosine + NH4(+). It catalyses the reaction adenosine + H2O + H(+) = inosine + NH4(+). It functions in the pathway amino-acid biosynthesis; S-adenosyl-L-methionine biosynthesis. Catalyzes the deamination of three SAM-derived enzymatic products, namely 5'-deoxyadenosine, S-adenosyl-L-homocysteine, and 5'-methylthioadenosine, to produce the inosine analogs. Can also deaminate adenosine. The preferred substrate for this enzyme is 5'-deoxyadenosine, but all these substrates are efficiently deaminated. Likely functions in a S-adenosyl-L-methionine (SAM) recycling pathway from S-adenosyl-L-homocysteine (SAH) produced from SAM-dependent methylation reactions. May also be involved in the recycling of 5'-deoxyadenosine, whereupon the 5'-deoxyribose moiety of 5'-deoxyinosine is further metabolized to deoxyhexoses used for the biosynthesis of aromatic amino acids in methanogens. The sequence is that of 5'-deoxyadenosine deaminase from Methanopyrus kandleri (strain AV19 / DSM 6324 / JCM 9639 / NBRC 100938).